We begin with the raw amino-acid sequence, 84 residues long: U21-theraphotoxin-Cg1b (84 aa).

An N-terminal signal peptide occupies residues 1–21 (MKVSVLITLAVLGVMFLLTSA). Positions 22 to 47 (EERGSDQMDSPAWLKSMERIFQSEER) are excised as a propeptide. Intrachain disulfides connect Cys-49/Cys-63, Cys-56/Cys-68, and Cys-62/Cys-76. Phe-82 carries the post-translational modification Phenylalanine amide.

The protein belongs to the neurotoxin 10 (Hwtx-1) family. 05 (F4a) subfamily. As to expression, expressed by the venom gland.

The protein localises to the secreted. Functionally, probable ion channel inhibitor. This Chilobrachys guangxiensis (Chinese earth tiger tarantula) protein is U21-theraphotoxin-Cg1b.